The sequence spans 201 residues: uncharacterized protein (201 aa).

Residues 53 to 74 are disordered; it reads PKKNTAHKNSTTSTVASSGNTT. Residues 59 to 74 show a composition bias toward polar residues; sequence HKNSTTSTVASSGNTT. One can recognise a bHLH domain in the interval 88–136; the sequence is AKRLSHKEVERRRREAISEGIKELANIVPGCEKNKGSILQRTAQYIRSL.

The protein resides in the nucleus. This is an uncharacterized protein from Schizosaccharomyces pombe (strain 972 / ATCC 24843) (Fission yeast).